The primary structure comprises 284 residues: Ermin (284 aa).

Residues M1–Q23 form a disordered region. Residue S73 is modified to Phosphoserine. The interval R110 to S251 is disordered. 2 stretches are compositionally biased toward basic and acidic residues: residues E126 to K140 and L171 to D183. The segment covering E184–E200 has biased composition (acidic residues). A compositionally biased stretch (basic and acidic residues) spans V201–G220. Residues S214, S226, S230, and S233 each carry the phosphoserine modification. A compositionally biased stretch (low complexity) spans D225–A235. A Phosphothreonine modification is found at T237. Residues K265–L284 are binds actin.

In terms of assembly, binds actin. Highly expressed in adult and fetal brain. Expressed at intermediate levels in the lung and liver.

It is found in the cytoplasm. The protein localises to the cytoskeleton. Functionally, plays a role in cytoskeletal rearrangements during the late wrapping and/or compaction phases of myelinogenesis as well as in maintenance and stability of myelin sheath in the adult. May play an important role in late-stage oligodendroglia maturation, myelin/Ranvier node formation during CNS development, and in the maintenance and plasticity of related structures in the mature CNS. The polypeptide is Ermin (ERMN) (Homo sapiens (Human)).